The sequence spans 94 residues: Late cornified envelope protein 3C (94 aa).

Residues 1–10 are compositionally biased toward low complexity; the sequence is MSCQQNQQQC. Disordered regions lie at residues 1–35 and 65–94; these read MSCQQNQQQCQPPPSCPSPKCPPKSPAQCLPPPSS and CRRQRSNSCDRGSGQQGGGSCRGHGSGGCC. Residues 11–34 are compositionally biased toward pro residues; the sequence is QPPPSCPSPKCPPKSPAQCLPPPS. Over residues 78-94 the composition is skewed to gly residues; sequence GQQGGGSCRGHGSGGCC.

It belongs to the LCE family. As to quaternary structure, interacts with CYSRT1; the interaction is direct. As to expression, skin-specific. Expression was readily detected in adult trunk skin, adult arm skin, fetal skin, penal skin, vulva, esophagus and tongue. Not expressed in the cervix, rectum, lung, colon, or placenta.

A structural component of the cornified envelope of the stratum corneum involved in innate cutaneous host defense. Possesses defensin-like antimicrobial activity against a broad spectrum of Gram-positive and Gram-negative bacteria, both aerobic and anaerobic species. Upon inflammation, may regulate skin barrier repair by shaping cutaneous microbiota composition and immune response to bacterial antigens. The polypeptide is Late cornified envelope protein 3C (Homo sapiens (Human)).